The primary structure comprises 440 residues: Gamma-aminobutyric acid receptor subunit pi (440 aa).

The signal sequence occupies residues 1–23 (MKRSLHLTFVCLSLFSARMCVQG). The Extracellular segment spans residues 24–241 (NQFNIEVSRS…LVLQFELQRN (218 aa)). Asn-43, Asn-102, and Asn-145 each carry an N-linked (GlcNAc...) asparagine glycan. Cys-160 and Cys-174 form a disulfide bridge. N-linked (GlcNAc...) asparagine glycans are attached at residues Asn-196 and Asn-228. Residues 242-262 (VLYFILETYVPSTFLVVLSWV) traverse the membrane as a helical segment. Residues 263-270 (SFWISLDS) lie on the Cytoplasmic side of the membrane. Residues 271 to 290 (VPARTCIGVTTVLSMTTLMI) traverse the membrane as a helical segment. The Extracellular portion of the chain corresponds to 291–301 (GSRTSLPNTNC). A helical membrane pass occupies residues 302-322 (FIKAIDVYLGICFSFVFGALL). Over 323 to 419 (EYAVAHYSSL…NPSNVDRYSK (97 aa)) the chain is Cytoplasmic. The helical transmembrane segment at 420-440 (LLFPLIFMLANVFYWAYYMYF) threads the bilayer.

It belongs to the ligand-gated ion channel (TC 1.A.9) family. Gamma-aminobutyric acid receptor (TC 1.A.9.5) subfamily. GABRP sub-subfamily. As to quaternary structure, heteropentamer, formed by a combination of alpha (GABRA1-6), beta (GABRB1-3), gamma (GABRG1-3), delta (GABRD), epsilon (GABRE), rho (GABRR1-3), pi (GABRP) and theta (GABRQ) chains, each subunit exhibiting distinct physiological and pharmacological properties.

Its subcellular location is the cell membrane. It is found in the apical cell membrane. The enzyme catalyses chloride(in) = chloride(out). Its function is as follows. Pi subunit of the heteropentameric ligand-gated chloride channel gated by gamma-aminobutyric acid (GABA). GABA-gated chloride channels, also named GABA(A) receptors (GABAAR), consist of five subunits arranged around a central pore and contain GABA active binding site(s) located at the alpha and beta subunit interfaces. When activated by GABA, GABAARs selectively allow the flow of chloride anions across the cell membrane down their electrochemical gradient. Pi-containing GABAARs are mostly located in peripheral tissues. In the uterus, pi subunits modulate uterus contraction by altering the sensitivity of GABAARs to pregnanolone. In the lungs, pi-containing GABAARs contribute to pulmonary fluid transport via luminal secretion of chloride. This chain is Gamma-aminobutyric acid receptor subunit pi (GABRP), found in Bos taurus (Bovine).